Here is a 201-residue protein sequence, read N- to C-terminus: UPF0301 protein Smed_0532 (201 aa).

The protein belongs to the UPF0301 (AlgH) family.

This Sinorhizobium medicae (strain WSM419) (Ensifer medicae) protein is UPF0301 protein Smed_0532.